The following is a 202-amino-acid chain: Putative 3-methyladenine DNA glycosylase (202 aa).

This sequence belongs to the DNA glycosylase MPG family.

The protein is Putative 3-methyladenine DNA glycosylase of Staphylococcus haemolyticus (strain JCSC1435).